The primary structure comprises 276 residues: MAVRKLKPTSPGRRFQTVSDFEEITRSTPEKSLVIGLTKKSGRNNNGRVTSRRRGGGHKRLYRIIDFRRDKAGIPAKVAHIEYDPNRTARIALLHYADGEKRYILAPVGIRQGDMILSGEGADIKPGNALPMSRIPVGTNLHNIELQPGRGGQFCRAAGTYAQLVAKEGKYALLRLPSGEVRKVLAACCATVGQVGNVNHENISLGKAGRARWLGNRPKVRGVAMNPIDHPLGGGEGRSSGGRHPVSPWGMPTKGYKTRDRKKASSKLIIKRRGQK.

Residues 222 to 276 (GVAMNPIDHPLGGGEGRSSGGRHPVSPWGMPTKGYKTRDRKKASSKLIIKRRGQK) are disordered. Residues 259 to 276 (RDRKKASSKLIIKRRGQK) show a composition bias toward basic residues.

The protein belongs to the universal ribosomal protein uL2 family. In terms of assembly, part of the 50S ribosomal subunit. Forms a bridge to the 30S subunit in the 70S ribosome.

Functionally, one of the primary rRNA binding proteins. Required for association of the 30S and 50S subunits to form the 70S ribosome, for tRNA binding and peptide bond formation. It has been suggested to have peptidyltransferase activity; this is somewhat controversial. Makes several contacts with the 16S rRNA in the 70S ribosome. The polypeptide is Large ribosomal subunit protein uL2 (Nitratidesulfovibrio vulgaris (strain ATCC 29579 / DSM 644 / CCUG 34227 / NCIMB 8303 / VKM B-1760 / Hildenborough) (Desulfovibrio vulgaris)).